The primary structure comprises 303 residues: MADTAPLGTRTDGVEGGVGLTALLVAAARAIETHRPDALAQDIYAEHFVLGARASAHWPVRLDRAPGGDTSPLWGRFARYFGLRTRVLDDFLLRSVRSAGIRQVVLLGAGLDARAFRLDWLSDCVIFEIDRDGVLAFKHRVLDTLSAEPGARRVPIGTDLRADWAGALTATGFDATAPTAWLVEGLLFYLPHAAETALIDTVDRLSAPGSALAYEVKLEKDLMAYRDSPLYVSTRRQLGIDLLDLFSREPRPDSAARLRDRGWTASVHTPFDFTRRHGRGPLPEENDALAGNRWVFADRARPA.

Residues aspartate 130 and 159–160 (DL) each bind S-adenosyl-L-methionine.

The protein belongs to the UPF0677 family.

Functionally, exhibits S-adenosyl-L-methionine-dependent methyltransferase activity. The protein is Putative S-adenosyl-L-methionine-dependent methyltransferase SCO6443 of Streptomyces coelicolor (strain ATCC BAA-471 / A3(2) / M145).